Reading from the N-terminus, the 339-residue chain is Anthranilate phosphoribosyltransferase (339 aa).

Residues Gly-81, 84 to 85 (GD), Thr-89, 91 to 94 (NVST), 109 to 117 (KHGNRSVSS), and Ser-121 contribute to the 5-phospho-alpha-D-ribose 1-diphosphate site. Anthranilate is bound at residue Gly-81. A Mg(2+)-binding site is contributed by Ser-93. Asn-112 is a binding site for anthranilate. Arg-167 is an anthranilate binding site. Mg(2+)-binding residues include Asp-226 and Glu-227.

It belongs to the anthranilate phosphoribosyltransferase family. As to quaternary structure, homodimer. It depends on Mg(2+) as a cofactor.

It carries out the reaction N-(5-phospho-beta-D-ribosyl)anthranilate + diphosphate = 5-phospho-alpha-D-ribose 1-diphosphate + anthranilate. The protein operates within amino-acid biosynthesis; L-tryptophan biosynthesis; L-tryptophan from chorismate: step 2/5. Catalyzes the transfer of the phosphoribosyl group of 5-phosphorylribose-1-pyrophosphate (PRPP) to anthranilate to yield N-(5'-phosphoribosyl)-anthranilate (PRA). This chain is Anthranilate phosphoribosyltransferase, found in Persephonella marina (strain DSM 14350 / EX-H1).